A 905-amino-acid polypeptide reads, in one-letter code: Alanine--tRNA ligase (905 aa).

4 residues coordinate Zn(2+): His-569, His-573, Cys-693, and His-697.

The protein belongs to the class-II aminoacyl-tRNA synthetase family. Zn(2+) serves as cofactor.

The protein resides in the cytoplasm. It catalyses the reaction tRNA(Ala) + L-alanine + ATP = L-alanyl-tRNA(Ala) + AMP + diphosphate. Its function is as follows. Catalyzes the attachment of alanine to tRNA(Ala) in a two-step reaction: alanine is first activated by ATP to form Ala-AMP and then transferred to the acceptor end of tRNA(Ala). Also edits incorrectly charged Ser-tRNA(Ala) and Gly-tRNA(Ala) via its editing domain. In Roseiflexus sp. (strain RS-1), this protein is Alanine--tRNA ligase.